The primary structure comprises 300 residues: Protein N-terminal and lysine N-methyltransferase EFM7 (300 aa).

Residues Trp75, 101–103 (GAG), Asp123, Trp156, and Ser179 contribute to the S-adenosyl-L-methionine site.

Belongs to the class I-like SAM-binding methyltransferase superfamily. EFM7 family.

It localises to the cytoplasm. Its function is as follows. S-adenosyl-L-methionine-dependent protein methyltransferase that trimethylates the N-terminal glycine 'Gly-2' of elongation factor 1-alpha, before also catalyzing the mono- and dimethylation of 'Lys-3'. This is Protein N-terminal and lysine N-methyltransferase EFM7 from Cryptococcus neoformans var. neoformans serotype D (strain JEC21 / ATCC MYA-565) (Filobasidiella neoformans).